A 129-amino-acid polypeptide reads, in one-letter code: Small ribosomal subunit protein uS11 (129 aa).

It belongs to the universal ribosomal protein uS11 family. In terms of assembly, part of the 30S ribosomal subunit. Interacts with proteins S7 and S18. Binds to IF-3.

Functionally, located on the platform of the 30S subunit, it bridges several disparate RNA helices of the 16S rRNA. Forms part of the Shine-Dalgarno cleft in the 70S ribosome. This is Small ribosomal subunit protein uS11 from Mycoplasma mycoides subsp. mycoides SC (strain CCUG 32753 / NCTC 10114 / PG1).